The following is a 226-amino-acid chain: Cytidylate kinase (226 aa).

Residue 10-18 (GPASSGKST) coordinates ATP.

It is found in the cytoplasm. The enzyme catalyses CMP + ATP = CDP + ADP. The catalysed reaction is dCMP + ATP = dCDP + ADP. This Streptococcus pyogenes serotype M6 (strain ATCC BAA-946 / MGAS10394) protein is Cytidylate kinase.